Here is a 408-residue protein sequence, read N- to C-terminus: Argininosuccinate synthase (408 aa).

ATP is bound by residues 14 to 22 and Ala-41; that span reads AYSGGLDTS. 2 residues coordinate L-citrulline: Tyr-92 and Ser-97. Gly-122 lines the ATP pocket. Residues Thr-124, Asn-128, and Asp-129 each coordinate L-aspartate. Residue Asn-128 coordinates L-citrulline. Residues Arg-132, Ser-181, Ser-190, Glu-266, and Tyr-278 each contribute to the L-citrulline site.

Belongs to the argininosuccinate synthase family. Type 1 subfamily. In terms of assembly, homotetramer.

It localises to the cytoplasm. It carries out the reaction L-citrulline + L-aspartate + ATP = 2-(N(omega)-L-arginino)succinate + AMP + diphosphate + H(+). Its pathway is amino-acid biosynthesis; L-arginine biosynthesis; L-arginine from L-ornithine and carbamoyl phosphate: step 2/3. The protein is Argininosuccinate synthase of Pelobacter propionicus (strain DSM 2379 / NBRC 103807 / OttBd1).